Here is a 1247-residue protein sequence, read N- to C-terminus: Structural polyprotein (1247 aa).

The segment at 52 to 103 (ALRTVPQKPRRTRKTKKQKQVKQEQQSTRNQKKKAPKQKQTQKKKRPGRRER) is disordered. 2 stretches are compositionally biased toward basic residues: residues 59-71 (KPRR…KQKQ) and 81-100 (NQKK…RPGR). The segment at 86–99 (APKQKQTQKKKRPG) is ribosome-binding. Cys112 and Cys127 are oxidised to a cystine. Residues 112–260 (CIFEVKHEGK…KITPEGSVEW (149 aa)) form the Peptidase S3 domain. The active-site Charge relay system is His138. The interval 154–159 (KRSSKY) is interaction with spike glycoprotein E2. Residues Asp160 and Ser212 each act as charge relay system in the active site. The interval 261-273 (SLALPVMCLLANT) is functions as an uncleaved signal peptide for the precursor of protein E3/E2. 9 disulfides stabilise this stretch: Cys268–Cys277, Cys282–Cys286, Cys285–Cys317, Cys343–Cys449, Cys346–Cys352, Cys415–Cys429, Cys477–Cys590, Cys525–Cys549, and Cys527–Cys544. N-linked (GlcNAc...) asparagine; by host glycosylation occurs at Asn272. Over 325-691 (NARENFNVYK…YYYELYPTTT (367 aa)) the chain is Extracellular. Asn587 carries an N-linked (GlcNAc...) asparagine; by host glycan. A helical membrane pass occupies residues 692–712 (IAVLAAASIVVASLVSLSLGM). Topologically, residues 713-747 (CICARRRCITPYELTPGATIPFLLGVLCCVKTAKA) are cytoplasmic. The segment at 715-719 (CARRR) is interaction with the capsid protein. S-palmitoyl cysteine; by host attachment occurs at residues Cys720, Cys740, and Cys741. The segment at 720 to 740 (CITPYELTPGATIPFLLGVLC) is transient transmembrane before p62-6K protein processing. The cysteines at positions 720 and 741 are disulfide-linked. Residues 748–762 (ASYYEAATYLWNEQQ) are Extracellular-facing. A helical membrane pass occupies residues 763–783 (PLFWLQLLIPLSAAIVACNCL). Topologically, residues 784 to 787 (KLLP) are cytoplasmic. Residues 788–808 (CCCKTLTFLAVMSIGARTVSA) form a helical membrane-spanning segment. Residues 809-1223 (YEHATVIPNT…AMSWVQKITG (415 aa)) lie on the Extracellular side of the membrane. Disulfide bonds link Cys857–Cys922, Cys870–Cys902, Cys871–Cys904, and Cys876–Cys886. An E1 fusion peptide loop region spans residues 892-909 (VYPFMWGGAYCFCDAENT). 2 N-linked (GlcNAc...) asparagine; by host glycosylation sites follow: Asn949 and Asn1078. 4 cysteine pairs are disulfide-bonded: Cys1067/Cys1079, Cys1109/Cys1184, Cys1114/Cys1188, and Cys1136/Cys1178. The helical transmembrane segment at 1224-1244 (GVGLVVAIAALILIIVLCVSF) threads the bilayer. Cys1241 is lipidated: S-palmitoyl cysteine; by host. Over 1245 to 1247 (SRH) the chain is Cytoplasmic.

As to quaternary structure, homodimer. Homomultimer. Interacts with host karyopherin KPNA4; this interaction allows the nuclear import of the viral capsid protein. Interacts with spike glycoprotein E2. Interacts with host IRAK1; the interaction leads to inhibition of IRAK1-dependent signaling. The precursor of protein E3/E2 and E1 form a heterodimer shortly after synthesis. In terms of assembly, the precursor of protein E3/E2 and E1 form a heterodimer shortly after synthesis. Processing of the precursor of protein E3/E2 into E2 and E3 results in a heterodimer of the spike glycoproteins E2 and E1. Spike at virion surface are constituted of three E2-E1 heterodimers. After target cell attachment and endocytosis, E1 change conformation to form homotrimers. Interacts with 6K protein. As to quaternary structure, interacts with spike glycoprotein E1. Processing of the precursor of protein E3/E2 into E2 and E3 results in a heterodimer of the spike glycoproteins E2 and E1. Spike at virion surface are constituted of a trimer of E2-E1 heterodimers. Interacts with 6K protein. Interacts with host MXRA8; this interaction mediates virus entry. Oligomer. Interacts with spike glycoprotein E1. Interacts with spike glycoprotein E2. Structural polyprotein: Specific enzymatic cleavages in vivo yield mature proteins. Capsid protein is auto-cleaved during polyprotein translation, unmasking a signal peptide at the N-terminus of the precursor of E3/E2. The remaining polyprotein is then targeted to the host endoplasmic reticulum, where host signal peptidase cleaves it into pE2, 6K and E1 proteins. pE2 is further processed to mature E3 and E2 by host furin in trans-Golgi vesicle. In terms of processing, palmitoylated via thioester bonds. These palmitoylations may induce disruption of the C-terminus transmembrane. This would result in the reorientation of E2 C-terminus from lumenal to cytoplasmic side. Post-translationally, N-glycosylated. Palmitoylated via thioester bonds.

It localises to the virion. Its subcellular location is the host cytoplasm. The protein localises to the host cell membrane. The protein resides in the virion membrane. It is found in the host Golgi apparatus. It localises to the host trans-Golgi network. Its subcellular location is the host endoplasmic reticulum. It carries out the reaction Autocatalytic release of the core protein from the N-terminus of the togavirus structural polyprotein by hydrolysis of a -Trp-|-Ser- bond.. Functionally, possesses a protease activity that results in its autocatalytic cleavage from the nascent structural protein. Following its self-cleavage, the capsid protein transiently associates with ribosomes, and within several minutes the protein binds to viral RNA and rapidly assembles into icosahedric core particles. The resulting nucleocapsid eventually associates with the cytoplasmic domain of the spike glycoprotein E2 at the cell membrane, leading to budding and formation of mature virions. In case of infection, new virions attach to target cells and after clathrin-mediated endocytosis their membrane fuses with the host endosomal membrane. This leads to the release of the nucleocapsid into the cytoplasm, followed by an uncoating event necessary for the genomic RNA to become accessible. The uncoating might be triggered by the interaction of capsid proteins with ribosomes. Binding of ribosomes would release the genomic RNA since the same region is genomic RNA-binding and ribosome-binding. In terms of biological role, provides the signal sequence for the translocation of the precursor of protein E3/E2 to the host endoplasmic reticulum. Mediates pH protection of spike glycoprotein E1 during the transport via the secretory pathway. Its function is as follows. Plays a role in viral attachment to target host cell, by binding to the cell receptor MXRA8. Synthesized as a p62 precursor which is processed by furin at the cell membrane just before virion budding, giving rise to E2-E1 heterodimer. The p62-E1 heterodimer is stable, whereas E2-E1 is unstable and dissociate at low pH. p62 is processed at the last step, presumably to avoid E1 fusion activation before its final export to cell surface. E2 C-terminus contains a transitory transmembrane that would be disrupted by palmitoylation, resulting in reorientation of the C-terminal tail from lumenal to cytoplasmic side. This step is critical since E2 C-terminus is involved in budding by interacting with capsid proteins. This release of E2 C-terminus in cytoplasm occurs lately in protein export, and precludes premature assembly of particles at the endoplasmic reticulum membrane. Acts as a viroporin that participates in virus glycoprotein processing and transport to the plasma membrane, cell permeabilization and budding of viral particles. Disrupts the calcium homeostasis of the cell, probably at the endoplasmic reticulum level. This leads to cytoplasmic calcium elevation. Because of its lipophilic properties, the 6K protein is postulated to influence the selection of lipids that interact with the transmembrane domains of the glycoproteins, which, in turn, affects the deformability of the bilayer required for the extreme curvature that occurs as budding proceeds. Present in low amount in virions, about 3% compared to viral glycoproteins. Functionally, class II viral fusion protein. Fusion activity is inactive as long as E1 is bound to E2 in mature virion. After virus attachment to target cell via host MXRA8 and endocytosis, acidification of the endosome induce dissociation of E1/E2 heterodimer and concomitant trimerization of the E1 subunits. This E1 trimer is fusion active, and promotes release of viral nucleocapsid in cytoplasm after endosome and viral membrane fusion. Efficient fusion requires the presence of cholesterol and sphingolipid in the target membrane. The chain is Structural polyprotein from O'nyong-nyong virus (strain SG650) (ONNV).